The primary structure comprises 345 residues: Glycerol-3-phosphate dehydrogenase [NAD(P)+] (345 aa).

NADPH is bound by residues S11, W12, H32, R33, and K106. Sn-glycerol 3-phosphate contacts are provided by K106, G137, and S139. Position 141 (A141) interacts with NADPH. Sn-glycerol 3-phosphate contacts are provided by K192, D245, S255, R256, and N257. K192 (proton acceptor) is an active-site residue. R256 serves as a coordination point for NADPH. The NADPH site is built by V280 and E282.

Belongs to the NAD-dependent glycerol-3-phosphate dehydrogenase family.

The protein localises to the cytoplasm. The catalysed reaction is sn-glycerol 3-phosphate + NAD(+) = dihydroxyacetone phosphate + NADH + H(+). The enzyme catalyses sn-glycerol 3-phosphate + NADP(+) = dihydroxyacetone phosphate + NADPH + H(+). Its pathway is membrane lipid metabolism; glycerophospholipid metabolism. In terms of biological role, catalyzes the reduction of the glycolytic intermediate dihydroxyacetone phosphate (DHAP) to sn-glycerol 3-phosphate (G3P), the key precursor for phospholipid synthesis. The polypeptide is Glycerol-3-phosphate dehydrogenase [NAD(P)+] (Bacillus velezensis (strain DSM 23117 / BGSC 10A6 / LMG 26770 / FZB42) (Bacillus amyloliquefaciens subsp. plantarum)).